The primary structure comprises 37 residues: Cytochrome b6-f complex subunit 5 (37 aa).

Residues 5–25 traverse the membrane as a helical segment; sequence LLSGIVLGLIPITLFGLLVAA.

Belongs to the PetG family. In terms of assembly, the 4 large subunits of the cytochrome b6-f complex are cytochrome b6, subunit IV (17 kDa polypeptide, PetD), cytochrome f and the Rieske protein, while the 4 small subunits are PetG, PetL, PetM and PetN. The complex functions as a dimer.

The protein resides in the plastid. The protein localises to the chloroplast thylakoid membrane. Functionally, component of the cytochrome b6-f complex, which mediates electron transfer between photosystem II (PSII) and photosystem I (PSI), cyclic electron flow around PSI, and state transitions. PetG is required for either the stability or assembly of the cytochrome b6-f complex. The sequence is that of Cytochrome b6-f complex subunit 5 from Pyropia yezoensis (Susabi-nori).